The sequence spans 154 residues: Myoglobin (154 aa).

Positions 2 to 148 constitute a Globin domain; it reads GLSDQEWQQV…FRNDMASKYK (147 aa). His-65 contributes to the nitrite binding site. His-65 provides a ligand contact to O2. Residue His-94 coordinates heme b.

It belongs to the globin family. As to quaternary structure, monomeric.

The protein localises to the cytoplasm. The protein resides in the sarcoplasm. The catalysed reaction is Fe(III)-heme b-[protein] + nitric oxide + H2O = Fe(II)-heme b-[protein] + nitrite + 2 H(+). It carries out the reaction H2O2 + AH2 = A + 2 H2O. In terms of biological role, monomeric heme protein which primary function is to store oxygen and facilitate its diffusion within muscle tissues. Reversibly binds oxygen through a pentacoordinated heme iron and enables its timely and efficient release as needed during periods of heightened demand. Depending on the oxidative conditions of tissues and cells, and in addition to its ability to bind oxygen, it also has a nitrite reductase activity whereby it regulates the production of bioactive nitric oxide. Under stress conditions, like hypoxia and anoxia, it also protects cells against reactive oxygen species thanks to its pseudoperoxidase activity. The protein is Myoglobin (MB) of Cerorhinca monocerata (Rhinoceros auklet).